The chain runs to 364 residues: Probable endopolygalacturonase B (364 aa).

The signal sequence occupies residues 1-20 (MHFFQSSLVAATMGAALVAA). Positions 21 to 29 (APAADLETR) are excised as a propeptide. A disulfide bridge connects residues C32 and C47. N138 and N141 each carry an N-linked (GlcNAc...) asparagine glycan. 6 PbH1 repeats span residues 159 to 188 (SDHL…DVGS), 189 to 210 (STYI…AVNS), 211 to 231 (GEHI…SIGS), 240 to 261 (VNDV…RIKT), 269 to 291 (VTGV…VVQQ), and 303 to 324 (TNGV…TSSA). Residue D203 is the Proton donor of the active site. C205 and C221 are disulfide-bonded. H225 is a catalytic residue. A disulfide bridge links C331 with C336. N338 carries N-linked (GlcNAc...) asparagine glycosylation. C355 and C364 form a disulfide bridge.

It belongs to the glycosyl hydrolase 28 family.

Its subcellular location is the secreted. It carries out the reaction (1,4-alpha-D-galacturonosyl)n+m + H2O = (1,4-alpha-D-galacturonosyl)n + (1,4-alpha-D-galacturonosyl)m.. Functionally, involved in maceration and soft-rotting of plant tissue. Hydrolyzes the 1,4-alpha glycosidic bonds of de-esterified pectate in the smooth region of the plant cell wall. This Aspergillus fumigatus (strain CBS 144.89 / FGSC A1163 / CEA10) (Neosartorya fumigata) protein is Probable endopolygalacturonase B (pgaB).